A 426-amino-acid chain; its full sequence is Serine hydroxymethyltransferase (426 aa).

(6S)-5,6,7,8-tetrahydrofolate-binding positions include Leu-113 and 117–119 (GHL). Residue Lys-222 is modified to N6-(pyridoxal phosphate)lysine. 363-365 (SPF) serves as a coordination point for (6S)-5,6,7,8-tetrahydrofolate.

It belongs to the SHMT family. Homodimer. Requires pyridoxal 5'-phosphate as cofactor.

The protein resides in the cytoplasm. The enzyme catalyses (6R)-5,10-methylene-5,6,7,8-tetrahydrofolate + glycine + H2O = (6S)-5,6,7,8-tetrahydrofolate + L-serine. Its pathway is one-carbon metabolism; tetrahydrofolate interconversion. It participates in amino-acid biosynthesis; glycine biosynthesis; glycine from L-serine: step 1/1. In terms of biological role, catalyzes the reversible interconversion of serine and glycine with tetrahydrofolate (THF) serving as the one-carbon carrier. This reaction serves as the major source of one-carbon groups required for the biosynthesis of purines, thymidylate, methionine, and other important biomolecules. Also exhibits THF-independent aldolase activity toward beta-hydroxyamino acids, producing glycine and aldehydes, via a retro-aldol mechanism. This chain is Serine hydroxymethyltransferase, found in Azobacteroides pseudotrichonymphae genomovar. CFP2.